Consider the following 378-residue polypeptide: Prolargin (378 aa).

A signal peptide spans 1–21; it reads MRASFFWLLPLLLILASVAQG. The tract at residues 22–62 is disordered; it reads QPTRPKPGIRRKPKPRPTPRFPQAPEPAEPTDLPPPLPPGP. The span at 28-38 shows a compositional bias: basic residues; that stretch reads PGIRRKPKPRP. Pro residues predominate over residues 39 to 62; that stretch reads TPRFPQAPEPAEPTDLPPPLPPGP. LRR repeat units follow at residues 91–110, 111–134, 135–158, 159–179, 180–203, 204–229, 230–250, 251–274, 275–299, 300–319, 320–358, and 359–378; these read RRVP…NNFI, TELP…NNRI, RKVD…KNQL, EEVP…QNLI, SRIP…HNRL, SDGV…HNIL, RKMP…SNKI, ETIP…YNKL, SDRG…HNKI, SNVP…NNSI, EKIN…GNFL, and KPPI…SVVI. N-linked (GlcNAc...) asparagine glycosylation is present at Asn-120. Residues Asn-285, Asn-316, and Asn-323 are each glycosylated (N-linked (GlcNAc...) asparagine). Cys-328 and Cys-369 form a disulfide bridge.

Belongs to the small leucine-rich proteoglycan (SLRP) family. SLRP class II subfamily. In terms of assembly, binds the basement membrane heparan sulfate proteoglycan perlecan and triple helical collagens type I and type II. In terms of processing, glycosylated; contains heparan sulfate. Expressed in cartilage throughout both fetal development and postnatal life. It is also expressed in the developing embryo prior to skeletogenesis. In adult, highest expression in lung, lower levels in cardiac and skeletal muscle.

The protein localises to the secreted. Its subcellular location is the extracellular space. It localises to the extracellular matrix. Functionally, may anchor basement membranes to the underlying connective tissue. The sequence is that of Prolargin (Prelp) from Mus musculus (Mouse).